The sequence spans 262 residues: Acyl-[acyl-carrier-protein]--UDP-N-acetylglucosamine O-acyltransferase (262 aa).

The protein belongs to the transferase hexapeptide repeat family. LpxA subfamily. Homotrimer.

The protein localises to the cytoplasm. It carries out the reaction a (3R)-hydroxyacyl-[ACP] + UDP-N-acetyl-alpha-D-glucosamine = a UDP-3-O-[(3R)-3-hydroxyacyl]-N-acetyl-alpha-D-glucosamine + holo-[ACP]. It participates in glycolipid biosynthesis; lipid IV(A) biosynthesis; lipid IV(A) from (3R)-3-hydroxytetradecanoyl-[acyl-carrier-protein] and UDP-N-acetyl-alpha-D-glucosamine: step 1/6. In terms of biological role, involved in the biosynthesis of lipid A, a phosphorylated glycolipid that anchors the lipopolysaccharide to the outer membrane of the cell. The polypeptide is Acyl-[acyl-carrier-protein]--UDP-N-acetylglucosamine O-acyltransferase (Shigella flexneri serotype 5b (strain 8401)).